Here is a 179-residue protein sequence, read N- to C-terminus: Gamma-glutamyl cyclotransferase verK (179 aa).

This sequence belongs to the class-I pyridoxal-phosphate-dependent aminotransferase family.

The catalysed reaction is an alpha-(gamma-L-glutamyl)-L-amino acid = 5-oxo-L-proline + an L-alpha-amino acid. It participates in mycotoxin biosynthesis. Gamma-glutamyl cyclotransferase; part of the gene cluster that mediates the biosynthesis of 11'-deoxyverticillin A, one of the dimeric epipolythiodioxopiperazines (ETPs) from the verticillin family that act as mycotoxins. 11'-deoxyverticillin A is required for normal conidiation. The nonribosomal peptide synthetase verP is speculated to be responsible for condensation of amino acids to form the carbon skeleton of verticillin, whereas the cluster-specific tailoring enzymes are involved in further modifications leading to the production of 11'-deoxyverticillin A. The chain is Gamma-glutamyl cyclotransferase verK from Clonostachys rogersoniana.